The sequence spans 72 residues: Small ribosomal subunit protein bS18 (72 aa).

This sequence belongs to the bacterial ribosomal protein bS18 family. Part of the 30S ribosomal subunit. Forms a tight heterodimer with protein bS6.

Binds as a heterodimer with protein bS6 to the central domain of the 16S rRNA, where it helps stabilize the platform of the 30S subunit. The polypeptide is Small ribosomal subunit protein bS18 (Francisella tularensis subsp. holarctica (strain FTNF002-00 / FTA)).